A 75-amino-acid chain; its full sequence is uncharacterized protein (75 aa).

A signal peptide spans 1-25 (MSLFYRAVALGTLSALVWYSTSILA). The helical transmembrane segment at 55–75 (YRALLAFSLVICGTLLVTCVI) threads the bilayer.

The protein localises to the host endoplasmic reticulum membrane. Its function is as follows. Plays a role in the down-regulation of the host NKG2D ligand MICA by targeting ER-resident MICA to proteasomal degradation prior to the GPI-anchoring step. In turn, MICA reduction diminishes NK-cell killing of HCMV-infected cells. This is an uncharacterized protein from Homo sapiens (Human).